Reading from the N-terminus, the 214-residue chain is MSVFISFEGVDGSGKSTQIRLLLQYLDEQSVPYVFTREPGGTPIAEQIRRVLLDPANRGMSVITEALLFAAARAEHVSRTIRPALEEGKVVICDRFVDSSLVYQGVAGGLPVEFLTQINEMATGALRPHRTIVLDLAPEVALARRTGEEADRIERQSREYHQLVREGYLDLARAEPRRVKVVDASRSVEEVQKDIRRLVEEVLPRRFRGAGTRP.

Residue 9–16 coordinates ATP; it reads GVDGSGKS.

This sequence belongs to the thymidylate kinase family.

The enzyme catalyses dTMP + ATP = dTDP + ADP. Functionally, phosphorylation of dTMP to form dTDP in both de novo and salvage pathways of dTTP synthesis. In Symbiobacterium thermophilum (strain DSM 24528 / JCM 14929 / IAM 14863 / T), this protein is Thymidylate kinase.